We begin with the raw amino-acid sequence, 332 residues long: Potassium channel subfamily K member 17 (332 aa).

Topologically, residues 1-20 (MYRPRARAAPEGRVRGCAVP) are cytoplasmic. Residues 21–43 (STVLLLLAYLAYLALGTGVFWTL) traverse the membrane as a helical segment. 2 N-linked (GlcNAc...) asparagine glycosylation sites follow: Asn-65 and Asn-94. Residues 106–124 (SFFFSVSTITTIGYGNLSP) constitute an intramembrane region (pore-forming). K(+) is bound by residues Thr-116, Ile-117, Gly-118, and Tyr-119. The tract at residues 116 to 121 (TIGYGN) is selectivity filter 1. Residues 128-148 (AARLFCIFFALVGIPLNLVVL) traverse the membrane as a helical segment. Over 149 to 179 (NRLGHLMQQGVNHWASRLGGTWQDPDKARWL) the chain is Cytoplasmic. A helical transmembrane segment spans residues 180–200 (AGSGALLSGLLLFLLLPPLLF). Positions 211 to 230 (GFYFAFITLSTVGFGDYVIG) form an intramembrane region, pore-forming. K(+) contacts are provided by Thr-221, Val-222, Gly-223, and Phe-224. Residues 221–226 (TVGFGD) are selectivity filter 2. The helical transmembrane segment at 244-264 (MVSLWILFGMAWLALIIKLIL) threads the bilayer. Over 265–332 (SQLETPGRVC…AHAAGCGKDS (68 aa)) the chain is Cytoplasmic. The segment at 287-312 (SQSWRQGPDREPESHSPQQGCYPEGP) is disordered.

This sequence belongs to the two pore domain potassium channel (TC 1.A.1.8) family. Homodimer; disulfide-linked. Heterodimer with KCNK5 and KCNK16. Widely expressed. Highly expressed in aorta and coronary artery. Expressed in pancreas, in both endocrine (alpha, beta, gamma, delta, and epsilon) and exocrine (acinar and ductal) cells.

It localises to the cell membrane. It carries out the reaction K(+)(in) = K(+)(out). The catalysed reaction is Rb(+)(in) = Rb(+)(out). It catalyses the reaction Cs(+)(in) = Cs(+)(out). Inhibited by Ba(2+), quinidine, chloroform and halothane. Activated at alkaline pH. Activated by quinine and isoflurane. In terms of biological role, k(+) channel that conducts voltage-dependent outward rectifying currents upon membrane depolarization. Voltage sensing is coupled to K(+) electrochemical gradient in an 'ion flux gating' mode where outward but not inward ion flow opens the gate. Homo- and heterodimerizes to form functional channels with distinct regulatory and gating properties. Present in the cardiac conduction system where it may regulate action potential duration and beating frequency of cardiac myocytes. Permeable to other monovalent cations such as Rb(+) and Cs(+). This is Potassium channel subfamily K member 17 from Homo sapiens (Human).